The chain runs to 505 residues: MIDDTENSKIHLEGSHKTGKYTGYGTTHKIRAQLNFNDEKKWKKFSSRRLELIDSFGLSQHKASEQDDNIRQIATILRSEFEYPDTFSAEFEKLVTAAVQSVRRNRKRSKKKLLDSKKKIARGKVQKIPLSPPSSSNMGSCSASNASSSDEEASVKEEPAEHALPSLNTITSQKLLPYPNGRTLPPVPTQVRSLLKKNASLLRDPSAPYAHGGDEKLQKFDIEDQPLESEQEYDFIAKSIIVEIVNNAIPLPEQIQRDKFIRPNLTKKKGCQSKVVISNNLRKLILSKIHNSRTCLEMSKDERNLDSFANLETLGKNSLMASISLVVENSFSHLPSSTKQYLTERLSSIEFLTILSQRLFMPATRQLFADLSQEKIQVRVLNLILGSLVKDYGFDASLAPINEIIYHMTLHQYPLVCSNKQSNPMRPHSTSEVLSAHSSTKDASTPGKEEPRVTRSSTSADSTIITLPSIEVPNTYDDDRLKMLSAISLQIENSTFSKPFSTISK.

Basic and acidic residues predominate over residues M1 to H16. Disordered regions lie at residues M1–G23, N105–P179, and Q421–A460. Over residues P133 to S148 the composition is skewed to low complexity. Positions Q421 to A443 are enriched in polar residues.

It belongs to the VHR1 family.

It localises to the nucleus. Its function is as follows. Transcription factor that regulates ERG9, but seems to have a more global function in transcription. This chain is Transcription factor VHR2 (VHR2), found in Saccharomyces cerevisiae (strain ATCC 204508 / S288c) (Baker's yeast).